The primary structure comprises 363 residues: Chorismate synthase (363 aa).

2 residues coordinate NADP(+): Arg48 and Arg54. Residues Arg125 to Ser127, Asn237 to Ala238, Gly277, Lys292 to Ser296, and Arg318 each bind FMN.

It belongs to the chorismate synthase family. In terms of assembly, homotetramer. The cofactor is FMNH2.

The catalysed reaction is 5-O-(1-carboxyvinyl)-3-phosphoshikimate = chorismate + phosphate. Its pathway is metabolic intermediate biosynthesis; chorismate biosynthesis; chorismate from D-erythrose 4-phosphate and phosphoenolpyruvate: step 7/7. Functionally, catalyzes the anti-1,4-elimination of the C-3 phosphate and the C-6 proR hydrogen from 5-enolpyruvylshikimate-3-phosphate (EPSP) to yield chorismate, which is the branch point compound that serves as the starting substrate for the three terminal pathways of aromatic amino acid biosynthesis. This reaction introduces a second double bond into the aromatic ring system. This is Chorismate synthase from Pseudomonas putida (strain ATCC 700007 / DSM 6899 / JCM 31910 / BCRC 17059 / LMG 24140 / F1).